Reading from the N-terminus, the 73-residue chain is Putative antitoxin M1627_0365 (73 aa).

It belongs to the UPF0330 family.

Functionally, possibly the antitoxin component of a type II toxin-antitoxin (TA) system. This chain is Putative antitoxin M1627_0365, found in Saccharolobus islandicus (strain M.16.27) (Sulfolobus islandicus).